The following is a 315-amino-acid chain: tRNA dimethylallyltransferase (315 aa).

13–20 contributes to the ATP binding site; that stretch reads GPTASGKT. Position 15–20 (15–20) interacts with substrate; sequence TASGKT. Interaction with substrate tRNA regions lie at residues 38-41, 162-166, 243-248, and 276-283; these read DSAL, QRLSR, RCVGYR, and KRQITWLR.

The protein belongs to the IPP transferase family. As to quaternary structure, monomer. Requires Mg(2+) as cofactor.

It catalyses the reaction adenosine(37) in tRNA + dimethylallyl diphosphate = N(6)-dimethylallyladenosine(37) in tRNA + diphosphate. Functionally, catalyzes the transfer of a dimethylallyl group onto the adenine at position 37 in tRNAs that read codons beginning with uridine, leading to the formation of N6-(dimethylallyl)adenosine (i(6)A). This Vibrio vulnificus (strain YJ016) protein is tRNA dimethylallyltransferase.